The following is an 88-amino-acid chain: uncharacterized protein (88 aa).

A helical membrane pass occupies residues 34-54 (IIIAVILIFFLTIVGLFYLII).

Its subcellular location is the membrane. This is an uncharacterized protein from Ureaplasma parvum serovar 3 (strain ATCC 700970).